The following is a 341-amino-acid chain: Methionine import ATP-binding protein MetN 2 (341 aa).

In terms of domain architecture, ABC transporter spans 2–241 (IELKEVVKEY…PQHTVTKRFV (240 aa)). Residue 38–45 (GFSGAGKS) participates in ATP binding.

The protein belongs to the ABC transporter superfamily. Methionine importer (TC 3.A.1.24) family. As to quaternary structure, the complex is composed of two ATP-binding proteins (MetN), two transmembrane proteins (MetI) and a solute-binding protein (MetQ).

It is found in the cell membrane. The enzyme catalyses L-methionine(out) + ATP + H2O = L-methionine(in) + ADP + phosphate + H(+). The catalysed reaction is D-methionine(out) + ATP + H2O = D-methionine(in) + ADP + phosphate + H(+). Part of the ABC transporter complex MetNIQ involved in methionine import. Responsible for energy coupling to the transport system. The polypeptide is Methionine import ATP-binding protein MetN 2 (Staphylococcus aureus (strain N315)).